We begin with the raw amino-acid sequence, 97 residues long: CLAVATA3/ESR (CLE)-related protein ESR2-C (97 aa).

The segment at 1 to 97 is disordered; it reads TRTDDKPGVN…IGPPPFLDRY (97 aa). Hydroxyproline is present on residues Pro-47 and Pro-50. A glycan (O-linked (Ara...) hydroxyproline) is linked at Pro-50.

The protein belongs to the CLV3/ESR signal peptide family. The O-glycosylation (arabinosylation) of the hydroxyproline Pro-50 enhances binding affinity of the ESR2Cp peptide for its receptor. In terms of tissue distribution, seed endosperm.

The protein localises to the secreted. Its subcellular location is the extracellular space. Functionally, extracellular signal peptide that regulates cell fate. The sequence is that of CLAVATA3/ESR (CLE)-related protein ESR2-C from Zea mays (Maize).